Consider the following 272-residue polypeptide: Pyrroline-5-carboxylate reductase (272 aa).

This sequence belongs to the pyrroline-5-carboxylate reductase family.

It localises to the cytoplasm. It carries out the reaction L-proline + NADP(+) = (S)-1-pyrroline-5-carboxylate + NADPH + 2 H(+). It catalyses the reaction L-proline + NAD(+) = (S)-1-pyrroline-5-carboxylate + NADH + 2 H(+). The protein operates within amino-acid biosynthesis; L-proline biosynthesis; L-proline from L-glutamate 5-semialdehyde: step 1/1. Functionally, catalyzes the reduction of 1-pyrroline-5-carboxylate (PCA) to L-proline. In Vibrio alginolyticus, this protein is Pyrroline-5-carboxylate reductase.